A 525-amino-acid polypeptide reads, in one-letter code: Ribosomal protein S6 kinase beta-1 (525 aa).

The TOS motif motif lies at 28-32 (FDIDL). Acidic residues predominate over residues 32–46 (LDQPEDAGSEDELEE). The tract at residues 32 to 54 (LDQPEDAGSEDELEEGGQLNESM) is disordered. The Protein kinase domain occupies 91-352 (FELLRVLGKG…AGEVQAHPFF (262 aa)). Residues 97 to 105 (LGKGGYGKV) and Lys123 contribute to the ATP site. Asp218 acts as the Proton acceptor in catalysis. A Phosphothreonine; by PDPK1 modification is found at Thr252. In terms of domain architecture, AGC-kinase C-terminal spans 353–423 (RHINWEELLA…VAPSVLESVK (71 aa)). The segment at 380–399 (SQFDSKFTRQTPVDSPDDST) is disordered. The segment covering 381 to 399 (QFDSKFTRQTPVDSPDDST) has biased composition (polar residues). Ser394 bears the Phosphoserine mark. Phosphothreonine; by MTOR, NEK6 and NEK7 is present on Thr412. The interval 424 to 525 (EKFSFEPKIR…KRPEHLRMNL (102 aa)) is autoinhibitory domain. 2 positions are modified to phosphoserine: Ser434 and Ser441. Thr444 is modified (phosphothreonine). Phosphoserine occurs at positions 447 and 452. Lys516 is subject to N6-acetyllysine.

It belongs to the protein kinase superfamily. AGC Ser/Thr protein kinase family. S6 kinase subfamily. Interacts with PPP1R9A/neurabin-1. Interacts with RPTOR. Interacts with IRS1. Interacts with EIF3B and EIF3C. Interacts with TRAF4. Interacts with POLDIP3. Interacts (via N-terminus) with IER5. Phosphorylation at Thr-412 is regulated by mTORC1. The phosphorylation at this site is maintained by an agonist-dependent autophosphorylation mechanism. Activated by phosphorylation at Thr-252 by PDPK1. Dephosphorylation by PPP1CC at Thr-412 in mitochondrion.

The protein resides in the cytoplasm. It localises to the synapse. Its subcellular location is the synaptosome. It is found in the mitochondrion outer membrane. The protein localises to the mitochondrion. The enzyme catalyses L-seryl-[protein] + ATP = O-phospho-L-seryl-[protein] + ADP + H(+). It carries out the reaction L-threonyl-[protein] + ATP = O-phospho-L-threonyl-[protein] + ADP + H(+). Its activity is regulated as follows. Activation requires multiple phosphorylation events on serine/threonine residues. Activation appears to be first mediated by phosphorylation of multiple sites in the autoinhibitory domain, which facilitates phosphorylation at Thr-412, disrupting the autoinhibitory mechanism and allowing phosphorylation of Thr-252 by PDPK1. The active conformation of the kinase is believed to be stabilized by a mechanism involving three conserved phosphorylation sites located in the kinase domain activation loop (Thr-252) and in the AGC-kinase C-terminal domain (Ser-394 in the middle of the tail/linker region and Thr-412 within a hydrophobic motif at its end). Activated by mTORC1; isoform Alpha I and isoform Alpha II are sensitive to rapamycin, which inhibits activating phosphorylation at Thr-412. Activated by PDPK1. Functionally, serine/threonine-protein kinase that acts downstream of mTOR signaling in response to growth factors and nutrients to promote cell proliferation, cell growth and cell cycle progression. Regulates protein synthesis through phosphorylation of EIF4B, RPS6 and EEF2K, and contributes to cell survival by repressing the pro-apoptotic function of BAD. Under conditions of nutrient depletion, the inactive form associates with the EIF3 translation initiation complex. Upon mitogenic stimulation, phosphorylation by the mechanistic target of rapamycin complex 1 (mTORC1) leads to dissociation from the EIF3 complex and activation. The active form then phosphorylates and activates several substrates in the pre-initiation complex, including the EIF2B complex and the cap-binding complex component EIF4B. Also controls translation initiation by phosphorylating a negative regulator of EIF4A, PDCD4, targeting it for ubiquitination and subsequent proteolysis. Promotes initiation of the pioneer round of protein synthesis by phosphorylating POLDIP3/SKAR. In response to IGF1, activates translation elongation by phosphorylating EEF2 kinase (EEF2K), which leads to its inhibition and thus activation of EEF2. Also plays a role in feedback regulation of mTORC2 by mTORC1 by phosphorylating MAPKAP1/SIN1, MTOR and RICTOR, resulting in the inhibition of mTORC2 and AKT1 signaling. Also involved in feedback regulation of mTORC1 and mTORC2 by phosphorylating DEPTOR. Mediates cell survival by phosphorylating the pro-apoptotic protein BAD and suppressing its pro-apoptotic function. Phosphorylates mitochondrial URI1 leading to dissociation of a URI1-PPP1CC complex. The free mitochondrial PPP1CC can then dephosphorylate RPS6KB1 at Thr-412, which is proposed to be a negative feedback mechanism for the RPS6KB1 anti-apoptotic function. Mediates TNF-alpha-induced insulin resistance by phosphorylating IRS1 at multiple serine residues, resulting in accelerated degradation of IRS1. In cells lacking functional TSC1-2 complex, constitutively phosphorylates and inhibits GSK3B. May be involved in cytoskeletal rearrangement through binding to neurabin. Phosphorylates and activates the pyrimidine biosynthesis enzyme CAD, downstream of MTOR. Following activation by mTORC1, phosphorylates EPRS and thereby plays a key role in fatty acid uptake by adipocytes and also most probably in interferon-gamma-induced translation inhibition. The polypeptide is Ribosomal protein S6 kinase beta-1 (Rps6kb1) (Mus musculus (Mouse)).